The following is a 1291-amino-acid chain: DNA-directed RNA polymerase subunit beta' (1291 aa).

Residues Cys-60, Cys-62, Cys-75, and Cys-78 each contribute to the Zn(2+) site. Positions 535, 537, and 539 each coordinate Mg(2+). Zn(2+) contacts are provided by Cys-878, Cys-954, Cys-961, and Cys-964.

This sequence belongs to the RNA polymerase beta' chain family. In terms of assembly, the RNAP catalytic core consists of 2 alpha, 1 beta, 1 beta' and 1 omega subunit. When a sigma factor is associated with the core the holoenzyme is formed, which can initiate transcription. Requires Mg(2+) as cofactor. The cofactor is Zn(2+).

It catalyses the reaction RNA(n) + a ribonucleoside 5'-triphosphate = RNA(n+1) + diphosphate. Its function is as follows. DNA-dependent RNA polymerase catalyzes the transcription of DNA into RNA using the four ribonucleoside triphosphates as substrates. In Thermobifida fusca (strain YX), this protein is DNA-directed RNA polymerase subunit beta'.